We begin with the raw amino-acid sequence, 615 residues long: UvrABC system protein C (615 aa).

The region spanning 12–91 (EKPGVYIMKD…IKKYKPKYNV (80 aa)) is the GIY-YIG domain. A UVR domain is found at 203–238 (DWLIQKLKEDMKKAAEELRFEEAARIRDQIFAIERT).

The protein belongs to the UvrC family. In terms of assembly, interacts with UvrB in an incision complex.

It localises to the cytoplasm. Its function is as follows. The UvrABC repair system catalyzes the recognition and processing of DNA lesions. UvrC both incises the 5' and 3' sides of the lesion. The N-terminal half is responsible for the 3' incision and the C-terminal half is responsible for the 5' incision. This Thermoanaerobacter sp. (strain X514) protein is UvrABC system protein C.